The following is a 100-amino-acid chain: Large ribosomal subunit protein eL21 (100 aa).

Belongs to the eukaryotic ribosomal protein eL21 family.

The protein is Large ribosomal subunit protein eL21 of Pyrobaculum arsenaticum (strain DSM 13514 / JCM 11321 / PZ6).